The chain runs to 247 residues: ATP synthase subunit a, chloroplastic (247 aa).

The next 5 helical transmembrane spans lie at 38–58 (QVLI…ILVV), 95–115 (VPFI…GALL), 134–154 (INTT…AGIS), 199–219 (LVVV…VMFL), and 220–240 (GLFT…AYIG).

Belongs to the ATPase A chain family. As to quaternary structure, F-type ATPases have 2 components, CF(1) - the catalytic core - and CF(0) - the membrane proton channel. CF(1) has five subunits: alpha(3), beta(3), gamma(1), delta(1), epsilon(1). CF(0) has four main subunits: a, b, b' and c.

The protein resides in the plastid. It localises to the chloroplast thylakoid membrane. Functionally, key component of the proton channel; it plays a direct role in the translocation of protons across the membrane. In Cicer arietinum (Chickpea), this protein is ATP synthase subunit a, chloroplastic.